Reading from the N-terminus, the 101-residue chain is Small ribosomal subunit protein uS14 (101 aa).

The protein belongs to the universal ribosomal protein uS14 family. As to quaternary structure, part of the 30S ribosomal subunit. Contacts proteins S3 and S10.

Binds 16S rRNA, required for the assembly of 30S particles and may also be responsible for determining the conformation of the 16S rRNA at the A site. This Novosphingobium aromaticivorans (strain ATCC 700278 / DSM 12444 / CCUG 56034 / CIP 105152 / NBRC 16084 / F199) protein is Small ribosomal subunit protein uS14.